The sequence spans 78 residues: MADEQKQQSFEQALEQLEQLVNELEQGDLPLEQSLKKFEQAIALSRSSQQQLQQAEQKVTTLLAEQQSGNDESNGELM.

The protein belongs to the XseB family. Heterooligomer composed of large and small subunits.

It is found in the cytoplasm. It carries out the reaction Exonucleolytic cleavage in either 5'- to 3'- or 3'- to 5'-direction to yield nucleoside 5'-phosphates.. In terms of biological role, bidirectionally degrades single-stranded DNA into large acid-insoluble oligonucleotides, which are then degraded further into small acid-soluble oligonucleotides. This chain is Exodeoxyribonuclease 7 small subunit, found in Idiomarina loihiensis (strain ATCC BAA-735 / DSM 15497 / L2-TR).